The chain runs to 212 residues: High frequency lysogenization protein HflD homolog (212 aa).

It belongs to the HflD family.

The protein resides in the cytoplasm. It is found in the cell inner membrane. In Stutzerimonas stutzeri (strain A1501) (Pseudomonas stutzeri), this protein is High frequency lysogenization protein HflD homolog.